Here is a 304-residue protein sequence, read N- to C-terminus: MSASTALPVRDRLRIAIQKSGRLTEPARRLLTACGLSWRQSRDKLFCYGESLPVDLLLVRDDDIPGLIAQGVCDLGIVGRNELDEQAASRRRNGLPVPYQTLRGLHFGQCRLMLAVPEEWEWQDISQLTGKRIATSYPAILTDWLQTHHIAAQIVELSGSVEIAPRLGTADLICDLVSSGATLAAHQLKPVIQIMESQAVLAGMIRQPADARAGLLAMLLRRMDGLLTLRDSNLLMFRAFQEHLDALTHLLPDADPLVQLPDDGSGTLRVQTMCHGTITWQRLEELERAGAQGLMVLTVERSLA.

It belongs to the ATP phosphoribosyltransferase family. Long subfamily. Mg(2+) serves as cofactor.

The protein localises to the cytoplasm. It catalyses the reaction 1-(5-phospho-beta-D-ribosyl)-ATP + diphosphate = 5-phospho-alpha-D-ribose 1-diphosphate + ATP. It functions in the pathway amino-acid biosynthesis; L-histidine biosynthesis; L-histidine from 5-phospho-alpha-D-ribose 1-diphosphate: step 1/9. Its activity is regulated as follows. Feedback inhibited by histidine. Catalyzes the condensation of ATP and 5-phosphoribose 1-diphosphate to form N'-(5'-phosphoribosyl)-ATP (PR-ATP). Has a crucial role in the pathway because the rate of histidine biosynthesis seems to be controlled primarily by regulation of HisG enzymatic activity. The chain is ATP phosphoribosyltransferase from Xylella fastidiosa (strain 9a5c).